A 197-amino-acid chain; its full sequence is Ribosomal RNA large subunit methyltransferase E (197 aa).

The S-adenosyl-L-methionine site is built by G52, W54, D72, D88, and D112. K152 (proton acceptor) is an active-site residue.

It belongs to the class I-like SAM-binding methyltransferase superfamily. RNA methyltransferase RlmE family.

It localises to the cytoplasm. It catalyses the reaction uridine(2552) in 23S rRNA + S-adenosyl-L-methionine = 2'-O-methyluridine(2552) in 23S rRNA + S-adenosyl-L-homocysteine + H(+). Functionally, specifically methylates the uridine in position 2552 of 23S rRNA at the 2'-O position of the ribose in the fully assembled 50S ribosomal subunit. The sequence is that of Ribosomal RNA large subunit methyltransferase E from Nitrosopumilus maritimus (strain SCM1).